A 477-amino-acid chain; its full sequence is Glycogen synthase (477 aa).

Lys15 is a binding site for ADP-alpha-D-glucose.

It belongs to the glycosyltransferase 1 family. Bacterial/plant glycogen synthase subfamily.

It carries out the reaction [(1-&gt;4)-alpha-D-glucosyl](n) + ADP-alpha-D-glucose = [(1-&gt;4)-alpha-D-glucosyl](n+1) + ADP + H(+). The protein operates within glycan biosynthesis; glycogen biosynthesis. In terms of biological role, synthesizes alpha-1,4-glucan chains using ADP-glucose. The chain is Glycogen synthase (glgA) from Salmonella typhimurium (strain LT2 / SGSC1412 / ATCC 700720).